We begin with the raw amino-acid sequence, 652 residues long: Acetyl-coenzyme A synthetase (652 aa).

CoA contacts are provided by residues 191-194 (RAGR), Thr311, and Asn335. ATP-binding positions include 387–389 (GEP), 411–416 (DTWWQT), Asp500, and Arg515. Residue Ser523 participates in CoA binding. An ATP-binding site is contributed by Arg526. Positions 537, 539, and 542 each coordinate Mg(2+). Arg584 contributes to the CoA binding site. Lys609 is subject to N6-acetyllysine.

The protein belongs to the ATP-dependent AMP-binding enzyme family. Mg(2+) is required as a cofactor. In terms of processing, acetylated. Deacetylation by the SIR2-homolog deacetylase activates the enzyme.

It carries out the reaction acetate + ATP + CoA = acetyl-CoA + AMP + diphosphate. Its function is as follows. Catalyzes the conversion of acetate into acetyl-CoA (AcCoA), an essential intermediate at the junction of anabolic and catabolic pathways. Acs undergoes a two-step reaction. In the first half reaction, Acs combines acetate with ATP to form acetyl-adenylate (AcAMP) intermediate. In the second half reaction, it can then transfer the acetyl group from AcAMP to the sulfhydryl group of CoA, forming the product AcCoA. Enables the cell to use acetate during aerobic growth to generate energy via the TCA cycle, and biosynthetic compounds via the glyoxylate shunt. Acetylates CheY, the response regulator involved in flagellar movement and chemotaxis. This chain is Acetyl-coenzyme A synthetase, found in Citrobacter koseri (strain ATCC BAA-895 / CDC 4225-83 / SGSC4696).